A 217-amino-acid polypeptide reads, in one-letter code: Spore coat protein F-like protein YhcQ (217 aa).

A compositionally biased stretch (low complexity) spans 1–11 (MDQFNQQQQSQ). Positions 1–28 (MDQFNQQQQSQMNKGIPGKPHKNHGGHE) are disordered.

It belongs to the CotF family.

It localises to the spore coat. This chain is Spore coat protein F-like protein YhcQ (yhcQ), found in Bacillus subtilis (strain 168).